Here is a 137-residue protein sequence, read N- to C-terminus: Small ribosomal subunit protein bS6 (137 aa).

The disordered stretch occupies residues 96–137 (ITEASPMAKAKDERDTRRSSEERAPRAEATEEVKESAENTAE). The span at 104–137 (KAKDERDTRRSSEERAPRAEATEEVKESAENTAE) shows a compositional bias: basic and acidic residues.

This sequence belongs to the bacterial ribosomal protein bS6 family.

Binds together with bS18 to 16S ribosomal RNA. This chain is Small ribosomal subunit protein bS6, found in Shewanella piezotolerans (strain WP3 / JCM 13877).